Consider the following 617-residue polypeptide: KIF-binding protein (617 aa).

The interval 48–83 (ALLGPAPEDEDEPAADDGPGDQALGAGEPREAEGPG) is disordered. Positions 54-66 (PEDEDEPAADDGP) are enriched in acidic residues. Phosphoserine is present on serine 174.

The protein belongs to the KIF-binding protein family. In terms of assembly, interacts with KIF1B; positively regulates KIF1B microtubule motor activity. Interacts with STMN2. In the embryo it is expressed in cortical neurons; expression increases during neuronal development.

It is found in the cytoplasm. It localises to the cytoskeleton. In terms of biological role, activator of KIF1B plus-end-directed microtubule motor activity. Required for organization of axonal microtubules, and axonal outgrowth and maintenance during peripheral and central nervous system development. In Mus musculus (Mouse), this protein is KIF-binding protein.